The sequence spans 237 residues: Lipoprotein-releasing system ATP-binding protein LolD (237 aa).

An ABC transporter domain is found at Ile8–Ala236. ATP is bound at residue Gly40–Ser47.

This sequence belongs to the ABC transporter superfamily. Lipoprotein translocase (TC 3.A.1.125) family. As to quaternary structure, the complex is composed of two ATP-binding proteins (LolD) and two transmembrane proteins (LolC and LolE).

Its subcellular location is the cell inner membrane. Its function is as follows. Part of the ABC transporter complex LolCDE involved in the translocation of mature outer membrane-directed lipoproteins, from the inner membrane to the periplasmic chaperone, LolA. Responsible for the formation of the LolA-lipoprotein complex in an ATP-dependent manner. The protein is Lipoprotein-releasing system ATP-binding protein LolD of Leptospira interrogans serogroup Icterohaemorrhagiae serovar Lai (strain 56601).